Reading from the N-terminus, the 156-residue chain is Transcription antitermination protein NusB (156 aa).

It belongs to the NusB family.

Its function is as follows. Involved in transcription antitermination. Required for transcription of ribosomal RNA (rRNA) genes. Binds specifically to the boxA antiterminator sequence of the ribosomal RNA (rrn) operons. This is Transcription antitermination protein NusB from Mycobacterium bovis (strain ATCC BAA-935 / AF2122/97).